The sequence spans 255 residues: NAD-dependent protein deacylase (255 aa).

A Deacetylase sirtuin-type domain is found at 1-253 (MIEEAPRIIA…VKVKRCLENK (253 aa)). Residue 20–39 (GAGVSAESGIPTFRDRGGLW) coordinates NAD(+). Tyr64 and Arg67 together coordinate substrate. An NAD(+)-binding site is contributed by 98-101 (QNID). His116 acts as the Proton acceptor in catalysis. Positions 124, 127, 151, and 154 each coordinate Zn(2+). NAD(+) is bound by residues 191–193 (GTS), 217–219 (NTK), and Ala235.

This sequence belongs to the sirtuin family. Class III subfamily. Zn(2+) serves as cofactor.

The protein localises to the cytoplasm. The catalysed reaction is N(6)-acetyl-L-lysyl-[protein] + NAD(+) + H2O = 2''-O-acetyl-ADP-D-ribose + nicotinamide + L-lysyl-[protein]. It carries out the reaction N(6)-succinyl-L-lysyl-[protein] + NAD(+) + H2O = 2''-O-succinyl-ADP-D-ribose + nicotinamide + L-lysyl-[protein]. Its function is as follows. NAD-dependent lysine deacetylase and desuccinylase that specifically removes acetyl and succinyl groups on target proteins. Modulates the activities of several proteins which are inactive in their acylated form. Deacetylates the N-terminal lysine residue of Alba, the major archaeal chromatin protein and that, in turn, increases Alba's DNA binding affinity, thereby repressing transcription. The protein is NAD-dependent protein deacylase of Thermococcus sibiricus (strain DSM 12597 / MM 739).